The following is a 509-amino-acid chain: Steroid 17-alpha-hydroxylase/17,20 lyase (509 aa).

Residue C445 participates in heme binding.

Belongs to the cytochrome P450 family. It depends on heme as a cofactor.

The protein localises to the membrane. The catalysed reaction is a C21-steroid + reduced [NADPH--hemoprotein reductase] + O2 = a 17alpha-hydroxy-C21-steroid + oxidized [NADPH--hemoprotein reductase] + H2O + H(+). It carries out the reaction 17alpha-hydroxyprogesterone + reduced [NADPH--hemoprotein reductase] + O2 = androst-4-ene-3,17-dione + acetate + oxidized [NADPH--hemoprotein reductase] + H2O + 2 H(+). It catalyses the reaction 17alpha-hydroxypregnenolone + reduced [NADPH--hemoprotein reductase] + O2 = 3beta-hydroxyandrost-5-en-17-one + acetate + oxidized [NADPH--hemoprotein reductase] + H2O + 2 H(+). It functions in the pathway lipid metabolism; steroid biosynthesis. Its function is as follows. Conversion of pregnenolone and progesterone to their 17-alpha-hydroxylated products and subsequently to dehydroepiandrosterone (DHEA) and androstenedione. Catalyzes both the 17-alpha-hydroxylation and the 17,20-lyase reaction. The polypeptide is Steroid 17-alpha-hydroxylase/17,20 lyase (CYP17A1) (Squalus acanthias (Spiny dogfish)).